A 272-amino-acid chain; its full sequence is Protein MGF 110-11L (272 aa).

Residues 1–17 (MKVLLGLLLGYSVLILA) form a helical membrane-spanning segment. An N-linked (GlcNAc...) asparagine; by host glycan is attached at asparagine 68. 2 helical membrane passes run 129-149 (QFCL…CALC) and 156-176 (TTMK…PVLN). N-linked (GlcNAc...) asparagine; by host glycosylation is present at asparagine 264.

The protein belongs to the asfivirus MGF 110 family.

Its subcellular location is the host membrane. Its function is as follows. Plays a role in virus cell tropism, and may be required for efficient virus replication in macrophages. The polypeptide is Protein MGF 110-11L (Ornithodoros (relapsing fever ticks)).